We begin with the raw amino-acid sequence, 402 residues long: Lipid-A-disaccharide synthase (402 aa).

This sequence belongs to the LpxB family.

The catalysed reaction is a lipid X + a UDP-2-N,3-O-bis[(3R)-3-hydroxyacyl]-alpha-D-glucosamine = a lipid A disaccharide + UDP + H(+). It participates in bacterial outer membrane biogenesis; LPS lipid A biosynthesis. In terms of biological role, condensation of UDP-2,3-diacylglucosamine and 2,3-diacylglucosamine-1-phosphate to form lipid A disaccharide, a precursor of lipid A, a phosphorylated glycolipid that anchors the lipopolysaccharide to the outer membrane of the cell. The sequence is that of Lipid-A-disaccharide synthase from Cupriavidus pinatubonensis (strain JMP 134 / LMG 1197) (Cupriavidus necator (strain JMP 134)).